The chain runs to 389 residues: MANVSFTFDSQEQNKELRPSRLVGRSDERNGRRQGTEQKKKEKEDSGFRVSEEGEIPLQQGSNTDSYARDDLTQQQRVSDVVMQRRSHETESRLWQRARTQDRRGSESRMMFDGRTQWSHAPVLSSAYPVRPGEDNCLFYMKNHLCEWGSECCYNHPPLQEIPCRIGKKLDCKAGACKRGSNCPFNHPKERDGDSLPMPQGRTPDLRRNDSGRRYNTESRSWPENKEKEVGQFRDHQDSKEDAQEVLLQQRPRDVEMRKRSRSPDFRAKTETKEHREAEERSSRESATATGKVSGKENELRPTYVYLLMMPENHNVDVQQTLQEQRKRNIKKARIEARLKLDQIRPTVVLENSRATKMMIEWGFTDFRKLQGSNLGNKKWICWVRKHCC.

Over residues 1 to 11 the composition is skewed to polar residues; that stretch reads MANVSFTFDSQ. Residues 1–110 form a disordered region; that stretch reads MANVSFTFDS…QDRRGSESRM (110 aa). 2 stretches are compositionally biased toward basic and acidic residues: residues 12–52 and 86–110; these read EQNK…RVSE and RSHE…ESRM. C3H1-type zinc fingers lie at residues 131-157 and 158-190; these read RPGE…YNHP and PLQE…HPKE. Residues 183–296 are disordered; it reads CPFNHPKERD…ATATGKVSGK (114 aa). Composition is skewed to basic and acidic residues over residues 204 to 243 and 251 to 284; these read PDLR…KEDA and RPRD…RSSR.

The polypeptide is Putative zinc finger CCCH domain-containing protein 10 (Arabidopsis thaliana (Mouse-ear cress)).